Here is a 209-residue protein sequence, read N- to C-terminus: Uracil phosphoribosyltransferase (209 aa).

5-phospho-alpha-D-ribose 1-diphosphate is bound by residues Arg-79, Arg-104, and 131–139 (DPMLATGVS). Residues Ile-194 and 199–201 (GDA) each bind uracil. Asp-200 provides a ligand contact to 5-phospho-alpha-D-ribose 1-diphosphate.

It belongs to the UPRTase family. The cofactor is Mg(2+).

The catalysed reaction is UMP + diphosphate = 5-phospho-alpha-D-ribose 1-diphosphate + uracil. The protein operates within pyrimidine metabolism; UMP biosynthesis via salvage pathway; UMP from uracil: step 1/1. With respect to regulation, allosterically activated by GTP. In terms of biological role, catalyzes the conversion of uracil and 5-phospho-alpha-D-ribose 1-diphosphate (PRPP) to UMP and diphosphate. The polypeptide is Uracil phosphoribosyltransferase (Thermotoga petrophila (strain ATCC BAA-488 / DSM 13995 / JCM 10881 / RKU-1)).